The primary structure comprises 70 residues: Myotoxin (70 aa).

Residues 1–22 (MKILYLLFAFLFLAFLSEPGNA) form the signal peptide. 3 disulfides stabilise this stretch: Cys-26–Cys-58, Cys-33–Cys-52, and Cys-40–Cys-59.

It belongs to the crotamine-myotoxin family. Monomer. In terms of tissue distribution, expressed by the venom gland.

The protein resides in the secreted. Cationic peptide that possesses multiple functions. It acts as a cell-penetrating peptide (CPP), and as a potent voltage-gated potassium channel (Kv) inhibitor. It exhibits antimicrobial activities, hind limb paralysis, and severe muscle necrosis by a non-enzymatic mechanism. This Crotalus adamanteus (Eastern diamondback rattlesnake) protein is Myotoxin.